We begin with the raw amino-acid sequence, 384 residues long: F-box only protein 5-B (384 aa).

Disordered regions lie at residues 1 to 20 (MMCG…KSSA) and 79 to 106 (DEEN…ETDS). Positions 9–19 (PSPKKLLSKSS) are enriched in low complexity. The span at 83–99 (SSLQDSGYSSILQNDSP) shows a compositional bias: polar residues. One can recognise an F-box domain in the interval 191-238 (AELFHRDFKHLLTKILRHLNAMDLINVIGVSTTWRKILQKDNWAYNTY). The ZBR-type zinc-finger motif lies at 311–359 (SLKACVDCGSPAKYDSYLHRAICTRESCKLDFCTLCSCKYHSSKSCLIS). Zn(2+) is bound by residues cysteine 315, cysteine 318, cysteine 333, cysteine 338, cysteine 343, cysteine 346, histidine 351, and cysteine 356.

In terms of assembly, part of a SCF (SKP1-cullin-F-box) protein ligase complex. Interacts with btrc. Interacts with skp1. Interacts with cdc20. Interacts with pin1; stabilizes fbxo5 by preventing its association with btrc in an isomerization-dependent pathway; this interaction is present during G2 phase and prevents fbxo5 degradation. Interacts with plk1. Proteolysed; proteolysis is induced by both cyclin B-cdk1 and cyclin A-cdk1/2 complex through probable phosphorylation. Proteolysis is inhibited by pin1 during G2.

The protein resides in the nucleus. It is found in the cytoplasm. The protein localises to the cytoskeleton. Its subcellular location is the spindle. It localises to the microtubule organizing center. The protein resides in the centrosome. The protein operates within protein modification; protein ubiquitination. Regulates progression through early mitosis by inhibiting the anaphase promoting complex/cyclosome (APC). Binds to the APC activators cdc20 to prevent APC activation. Can also bind directly to the APC to inhibit substrate-binding. Required to arrest unfertilized eggs at metaphase of meiosis II, by preventing their release from metaphase of meiosis II, through inhibition of APC-dependent cyclin B destruction leading to stabilization of cyclin B-cdk1 complex activity. The sequence is that of F-box only protein 5-B (fbxo5-b) from Xenopus laevis (African clawed frog).